Here is a 176-residue protein sequence, read N- to C-terminus: Shikimate kinase (176 aa).

10-15 is an ATP binding site; the sequence is TSGKSS. Ser14 serves as a coordination point for Mg(2+). The substrate site is built by Asp32, Gly81, and Arg138.

Belongs to the shikimate kinase family. Monomer. Mg(2+) serves as cofactor.

The protein localises to the cytoplasm. It catalyses the reaction shikimate + ATP = 3-phosphoshikimate + ADP + H(+). Its pathway is metabolic intermediate biosynthesis; chorismate biosynthesis; chorismate from D-erythrose 4-phosphate and phosphoenolpyruvate: step 5/7. Functionally, catalyzes the specific phosphorylation of the 3-hydroxyl group of shikimic acid using ATP as a cosubstrate. In Chlamydia pneumoniae (Chlamydophila pneumoniae), this protein is Shikimate kinase.